We begin with the raw amino-acid sequence, 361 residues long: Ankyrin repeat domain-containing protein 16 (361 aa).

ANK repeat units lie at residues 36 to 66, 70 to 99, 103 to 132, 136 to 165, 170 to 200, 204 to 233, 238 to 268, 273 to 302, and 306 to 335; these read AGDT…DIEA, DYKR…VVDS, ADWT…NPLL, DGWN…DAWK, IRRT…EPDC, CGVT…ACSS, MGAQ…DVDV, SQLT…DINS, and RNRS…KDSE.

As to quaternary structure, interacts with AARS; the interaction is direct. As to expression, widely expressed in brain (at protein level).

It is found in the cytoplasm. The protein localises to the nucleus. Functionally, required to prevent the misactivation of serine (Ser) with tRNA(Ala) by promoting the hydrolysis of Ser-mischarged tRNA(Ala), thereby playing a role in translational fidelity. Binds directly to the catalytic domain of AARS/AlaRS and captures Ser that is misactivated by AARS/AlaRS, preventing the charging of Ser adenylates to tRNA(Ala) and precluding Ser misincorporation in nascent peptides. The sequence is that of Ankyrin repeat domain-containing protein 16 from Mus musculus (Mouse).